A 27-amino-acid polypeptide reads, in one-letter code: ARRRRRSSRPQRRRRRRRHGRRRRGRR.

The disordered stretch occupies residues 1–27 (ARRRRRSSRPQRRRRRRRHGRRRRGRR).

In terms of tissue distribution, testis.

The protein resides in the nucleus. It localises to the chromosome. Protamines substitute for histones in the chromatin of sperm during the haploid phase of spermatogenesis. They compact sperm DNA into a highly condensed, stable and inactive complex. In Acipenser stellatus (Sevruga), this protein is Protamine-B.